Consider the following 469-residue polypeptide: Adenosylhomocysteinase (469 aa).

Thr-63, Asp-139, and Glu-164 together coordinate substrate. Position 165–167 (Thr-165–Thr-167) interacts with NAD(+). Substrate is bound by residues Lys-194 and Asp-198. Residues Asn-199, Gly-228–Gly-233, Glu-251, Asn-300, Ile-321–His-323, and Asn-375 each bind NAD(+).

The protein belongs to the adenosylhomocysteinase family. NAD(+) is required as a cofactor.

It is found in the cytoplasm. The enzyme catalyses S-adenosyl-L-homocysteine + H2O = L-homocysteine + adenosine. The protein operates within amino-acid biosynthesis; L-homocysteine biosynthesis; L-homocysteine from S-adenosyl-L-homocysteine: step 1/1. Its function is as follows. May play a key role in the regulation of the intracellular concentration of adenosylhomocysteine. The protein is Adenosylhomocysteinase of Pseudomonas fluorescens (strain Pf0-1).